The sequence spans 247 residues: Opacity protein opA52 (247 aa).

A signal peptide is located at residue Ala-1.

This sequence belongs to the opacity porin family.

The protein resides in the cell outer membrane. Functionally, implicated in a number of adherence functions. OPA proteins are implicated in pathogenesis and are subject to phase variation. In Neisseria gonorrhoeae, this protein is Opacity protein opA52 (opaG).